We begin with the raw amino-acid sequence, 318 residues long: Ferredoxin--NADP reductase (318 aa).

Residues D33, Q41, Y46, V84, F115, D276, and T316 each contribute to the FAD site.

This sequence belongs to the ferredoxin--NADP reductase type 2 family. Homodimer. It depends on FAD as a cofactor.

It catalyses the reaction 2 reduced [2Fe-2S]-[ferredoxin] + NADP(+) + H(+) = 2 oxidized [2Fe-2S]-[ferredoxin] + NADPH. The sequence is that of Ferredoxin--NADP reductase from Lactobacillus johnsonii (strain CNCM I-12250 / La1 / NCC 533).